The following is a 155-amino-acid chain: MDRPRTLRTYRGLIRAILKYERPSKIVNWGNLRKAMITKLEYAKKQNQRDSHENINRQLEKWKKLDPVSDRSLNLFIADSKSLRSILQNDIKWEKKVAQGQNVDEIFEHALDIIKFLDNQREYEELVDRYNPGNKLTQDEKVKRTANVVGLDVPT.

The protein belongs to the FMC1 family.

Its subcellular location is the mitochondrion. Needed for the assembly of the mitochondrial F1-F0 complex at high temperature. The chain is ATP synthase assembly factor FMC1, mitochondrial (FMC1) from Saccharomyces cerevisiae (strain ATCC 204508 / S288c) (Baker's yeast).